Consider the following 400-residue polypeptide: Tryptophan--tRNA ligase, cytoplasmic (400 aa).

The 'HIGH' region motif lies at 95–104 (PSSGSLHFGH). Positions 281-285 (KMSAS) match the 'KMSKS' region motif.

Belongs to the class-I aminoacyl-tRNA synthetase family.

The protein localises to the cytoplasm. It catalyses the reaction tRNA(Trp) + L-tryptophan + ATP = L-tryptophyl-tRNA(Trp) + AMP + diphosphate + H(+). In Dictyostelium discoideum (Social amoeba), this protein is Tryptophan--tRNA ligase, cytoplasmic (trpS).